The sequence spans 148 residues: uncharacterized protein (148 aa).

This is an uncharacterized protein from Schizosaccharomyces pombe (strain 972 / ATCC 24843) (Fission yeast).